Reading from the N-terminus, the 559-residue chain is Subtelomeric hrmA-associated cluster protein AFUB_079030 (559 aa).

Disordered stretches follow at residues 163–190 (AKHPYNGGKPPAGAPPGKKGDPEKTKPE), 298–351 (RESN…TGMA), 427–451 (SITSSSPEQTSHHRQAPLPMQHSAS), and 525–559 (FRTGFLSHPCDPSQQAPHSSGCGHPDSWTQNRPHV). Positions 169 to 179 (GGKPPAGAPPG) are enriched in low complexity. Composition is skewed to basic and acidic residues over residues 180 to 189 (KKGDPEKTKP) and 300 to 325 (SNQKEKDGDSNVDPDQKHEQEDDNAR). Residues 336–346 (NSTSPMSNSAE) are compositionally biased toward polar residues.

Functionally, part of the subtelomeric hrmA-associated cluster (HAC) containing genes that alter the hyphal surface (such as reduced total chitin or increased beta-glucan exposure) and perturb inter-hyphal interactions within the developing biofilms, resulting in a loss of vertically aligned polarized growing filaments. Consequently, this hypoxia-typic morphotype (called H-MORPH) with altered biofilm architecture leads to increased hypoxia fitness, increased host inflammation, rapid disease progression, and mortality in a murine model of invasive aspergillosis. In Aspergillus fumigatus (strain CBS 144.89 / FGSC A1163 / CEA10) (Neosartorya fumigata), this protein is Subtelomeric hrmA-associated cluster protein AFUB_079030.